The primary structure comprises 147 residues: Two-component response regulator ORR11 (147 aa).

The Response regulatory domain occupies His29–Leu146. Asp79 bears the 4-aspartylphosphate mark.

The protein belongs to the ARR family. Type-A subfamily. Two-component system major event consists of a His-to-Asp phosphorelay between a sensor histidine kinase (HK) and a response regulator (RR). In plants, the His-to-Asp phosphorelay involves an additional intermediate named Histidine-containing phosphotransfer protein (HPt). This multistep phosphorelay consists of a His-Asp-His-Asp sequential transfer of a phosphate group between first a His and an Asp of the HK protein, followed by the transfer to a conserved His of the HPt protein and finally the transfer to an Asp in the receiver domain of the RR protein.

Functionally, functions as a response regulator involved in His-to-Asp phosphorelay signal transduction system. Phosphorylation of the Asp residue in the receiver domain activates the ability of the protein to promote the transcription of target genes. Type-A response regulators seem to act as negative regulators of the cytokinin signaling. The polypeptide is Two-component response regulator ORR11 (Oryza sativa subsp. indica (Rice)).